The sequence spans 208 residues: Putative dioxygenase RF_0617 (208 aa).

This sequence belongs to the intradiol ring-cleavage dioxygenase family.

The protein is Putative dioxygenase RF_0617 of Rickettsia felis (strain ATCC VR-1525 / URRWXCal2) (Rickettsia azadi).